Reading from the N-terminus, the 1133-residue chain is MDELPFGEAAVEQALDELGELDAALLTDIQDMLQLINNQDSDFPGLFDSPYAGGGAGDTEPTSPGANSPESLSSPASLGSSLEAFLGEPKATPASLSPVPSASTALKMYPSVPPFSPGPGIKEEPVPLTILQPPAAQPSPGTLLPPSFPPPPLQLSPAPVLGYSSLPSGFSGTLPGNTQQPPSSLSLASAPGVSPISLHTQVQSSASQQPLPASTAPRTTTVTSQIQRVPVVLQPHFIKADSLLLTTVKTDTGATMKTAGISTLAPGTAVQAGPLQTLVSGGTILATVPLVVDTDKLPIHRLAAGSKALGSAQSRGEKRTAHNAIEKRYRSSINDKIVELKDLVVGTEAKLNKSAVLRKAIDYIRFLQHSNQKLKQENLALRNAAHKSKSLKDLVSACGSAGGTDVAMEGVKPEVVDTLTPPPSDAGSPSQSSPLSLGSRGSSSGGSDSEPDSPVFEDSQVKAQRLHSHGMLDRSRLALCALVFLCLTCNPLASLFGWGIPGPSSASGAHHSSGRSMLEAESRDGSNWTQWLLPPLVWLANGLLVLACLALLFVYGEPVTRPHTSPAVHFWRHRKQADLDLARGDFAQAAQQLWLALQALGRPLPTSNLDLACSLLWNLIRHLLQRLWVGRWLAGRAGGLRRDCGLRMDARASARDAALVYHKLHQLHAMGKYTGGHLIASNLALSALNLAECAGDAVSMATLAEIYVAAALRVKTSLPRALHFLTRFFLSSARQACLAQSGSVPLAMQWLCHPVGHRFFVDGDWAVHGAPQESLYSVAGNPVDPLAQVTRLFCEHLLERALNCIAQPSPGTADGDREFSDALGYLQLLNRCSDAVGTPACSFSVSSSMASTTGTDPVAKWWASLTAVVIHWLRRDEEAAERLYPLVERMPHVLQETERPLPKAALYSFKAARALLDHRKVESGPASLAICEKASGYLRDSLAAPPTGSSIDKAMQLLLCDLLLVARTSMWQRQQSPASAQVAHSASNGSQASALELRGFQQDLSSLRRLAQNFRPAMRRVFLHEATARLMAGASPARTHQLLDRSLRRRAGSSGKGGTVAELEPRPTWREHTEALLLASCYLPPAFLSAPGQQMSMLAEAARTVEKLGDHRLLLDCQQMLLRLGGGTTVTSS.

The transcriptional activation (acidic) stretch occupies residues 1-60; that stretch reads MDELPFGEAAVEQALDELGELDAALLTDIQDMLQLINNQDSDFPGLFDSPYAGGGAGDTE. Residues 1-476 lie on the Cytoplasmic side of the membrane; sequence MDELPFGEAA…HSHGMLDRSR (476 aa). The 9aaTAD signature appears at 27–35; that stretch reads TDIQDMLQL. Positions 46–78 are disordered; the sequence is LFDSPYAGGGAGDTEPTSPGANSPESLSSPASL. Residues 68-78 show a composition bias toward low complexity; the sequence is SPESLSSPASL. S97 and S116 each carry phosphoserine. The disordered stretch occupies residues 131-219; the sequence is LQPPAAQPSP…PLPASTAPRT (89 aa). Positions 165–180 are enriched in polar residues; that stretch reads SLPSGFSGTLPGNTQQ. 2 stretches are compositionally biased toward low complexity: residues 181-191 and 203-217; these read PPSSLSLASAP and QSSA…STAP. The tract at residues 227 to 486 is interaction with LMNA; it reads QRVPVVLQPH…LALCALVFLC (260 aa). One can recognise a bHLH domain in the interval 317–367; the sequence is EKRTAHNAIEKRYRSSINDKIVELKDLVVGTEAKLNKSAVLRKAIDYIRFL. A phosphoserine; by SIK1 mark is found at S331 and S332. The interval 367–388 is leucine-zipper; the sequence is LQHSNQKLKQENLALRNAAHKS. Phosphoserine; by AMPK is present on S390. S396 bears the Phosphoserine; by SIK1 mark. The interval 415-456 is disordered; the sequence is VVDTLTPPPSDAGSPSQSSPLSLGSRGSSSGGSDSEPDSPVF. Over residues 425–454 the composition is skewed to low complexity; it reads DAGSPSQSSPLSLGSRGSSSGGSDSEPDSP. S449 carries the post-translational modification Phosphoserine. The chain crosses the membrane as a helical span at residues 477–497; the sequence is LALCALVFLCLTCNPLASLFG. The Lumenal portion of the chain corresponds to 498–535; it reads WGIPGPSSASGAHHSSGRSMLEAESRDGSNWTQWLLPP. A helical membrane pass occupies residues 536 to 556; that stretch reads LVWLANGLLVLACLALLFVYG. Residues 557–1133 lie on the Cytoplasmic side of the membrane; that stretch reads EPVTRPHTSP…LGGGTTVTSS (577 aa). Position 1046 is a phosphoserine (S1046).

It belongs to the SREBP family. Efficient DNA binding of the soluble transcription factor fragment requires dimerization with another bHLH protein. Interacts with CEBPA, the interaction produces a transcriptional synergy. Interacts with LMNA. As to quaternary structure, forms a tight complex with SCAP, the SCAP-SREBP complex, in the endoplasmic reticulum membrane and the Golgi apparatus. Interacts with PAQR3; the interaction anchors the SCAP-SREBP complex to the Golgi apparatus in low cholesterol conditions. In terms of processing, processed in the Golgi apparatus, releasing the protein from the membrane. At low cholesterol the SCAP-SREBP complex is recruited into COPII vesicles for export from the endoplasmic reticulum. In the Golgi, complex SREBPs are cleaved sequentially by site-1 (MBTPS1, S1P) and site-2 (MBTPS2, S2P) proteases. The first cleavage by site-1 protease occurs within the luminal loop, the second cleavage by site-2 protease occurs within the first transmembrane domain, releasing the transcription factor from the Golgi membrane. Phosphorylated by AMPK, leading to suppress protein processing and nuclear translocation, and repress target gene expression. Phosphorylation at Ser-396 by SIK1 represses activity possibly by inhibiting DNA-binding. Post-translationally, SCAP-free SREBF1 is ubiquitinated by the BCR(ARMC5) complex, leading to its degradation. In terms of processing, ubiquitinated; the nuclear form has a rapid turnover and is rapidly ubiquitinated and degraded by the proteasome in the nucleus.

The protein localises to the endoplasmic reticulum membrane. It is found in the golgi apparatus membrane. The protein resides in the cytoplasmic vesicle. It localises to the COPII-coated vesicle membrane. Its subcellular location is the nucleus. With respect to regulation, activation by cleavage is down-regulated upon activation of SIRT3-dependent PRKAA1/AMPK-alpha signaling cascade which leads to inhibition of ATP-consuming lipogenesis to restore cellular energy balance. Its function is as follows. Precursor of the transcription factor form (Processed sterol regulatory element-binding protein 1), which is embedded in the endoplasmic reticulum membrane. Low sterol concentrations promote processing of this form, releasing the transcription factor form that translocates into the nucleus and activates transcription of genes involved in cholesterol biosynthesis and lipid homeostasis. Key transcription factor that regulates expression of genes involved in cholesterol biosynthesis and lipid homeostasis. Binds to the sterol regulatory element 1 (SRE-1) (5'-ATCACCCCAC-3'). Has dual sequence specificity binding to both an E-box motif (5'-ATCACGTGA-3') and to SRE-1 (5'-ATCACCCCAC-3'). Regulates the promoters of genes involved in cholesterol biosynthesis and the LDL receptor (LDLR) pathway of sterol regulation. The sequence is that of Sterol regulatory element-binding protein 1 from Cricetulus griseus (Chinese hamster).